Here is a 328-residue protein sequence, read N- to C-terminus: Phenylalanine--tRNA ligase alpha subunit (328 aa).

Glutamate 253 lines the Mg(2+) pocket.

It belongs to the class-II aminoacyl-tRNA synthetase family. Phe-tRNA synthetase alpha subunit type 1 subfamily. In terms of assembly, tetramer of two alpha and two beta subunits. Requires Mg(2+) as cofactor.

Its subcellular location is the cytoplasm. The catalysed reaction is tRNA(Phe) + L-phenylalanine + ATP = L-phenylalanyl-tRNA(Phe) + AMP + diphosphate + H(+). This Actinobacillus pleuropneumoniae serotype 5b (strain L20) protein is Phenylalanine--tRNA ligase alpha subunit.